Reading from the N-terminus, the 282-residue chain is Acetyl-coenzyme A carboxylase carboxyl transferase subunit beta (282 aa).

A CoA carboxyltransferase N-terminal domain is found at 29-282 (LMKRCPNCGL…LLKYGGMQDD (254 aa)). Residues Cys-33, Cys-36, Cys-51, and Cys-54 each coordinate Zn(2+). The C4-type zinc finger occupies 33–54 (CPNCGLEFFARRLDKYKTCPDC).

This sequence belongs to the AccD/PCCB family. Acetyl-CoA carboxylase is a heterohexamer composed of biotin carboxyl carrier protein (AccB), biotin carboxylase (AccC) and two subunits each of ACCase subunit alpha (AccA) and ACCase subunit beta (AccD). The cofactor is Zn(2+).

Its subcellular location is the cytoplasm. It carries out the reaction N(6)-carboxybiotinyl-L-lysyl-[protein] + acetyl-CoA = N(6)-biotinyl-L-lysyl-[protein] + malonyl-CoA. It functions in the pathway lipid metabolism; malonyl-CoA biosynthesis; malonyl-CoA from acetyl-CoA: step 1/1. Component of the acetyl coenzyme A carboxylase (ACC) complex. Biotin carboxylase (BC) catalyzes the carboxylation of biotin on its carrier protein (BCCP) and then the CO(2) group is transferred by the transcarboxylase to acetyl-CoA to form malonyl-CoA. This Lactobacillus delbrueckii subsp. bulgaricus (strain ATCC 11842 / DSM 20081 / BCRC 10696 / JCM 1002 / NBRC 13953 / NCIMB 11778 / NCTC 12712 / WDCM 00102 / Lb 14) protein is Acetyl-coenzyme A carboxylase carboxyl transferase subunit beta.